Reading from the N-terminus, the 145-residue chain is MAHFQNQYSAPEVTQTDAYGNPTRRTDEYGNPIPTQETGRGILGIGGHHHGGHHGLHRTGSSSSSSSSSEDEGTGKKKKGLKERLKEKIPGNKEHQSQATSTTTPGQGPTYHQHHREERSDGQDQGEAPWSPQPLISCLWSAISY.

Positions 1–18 (MAHFQNQYSAPEVTQTDA) are enriched in polar residues. The disordered stretch occupies residues 1–136 (MAHFQNQYSA…EAPWSPQPLI (136 aa)). The segment covering 47–57 (GHHHGGHHGLH) has biased composition (basic residues). Residues 58 to 68 (RTGSSSSSSSS) show a composition bias toward low complexity. A compositionally biased stretch (basic and acidic residues) spans 82–96 (KERLKEKIPGNKEHQ). The span at 97–107 (SQATSTTTPGQ) shows a compositional bias: polar residues.

The protein belongs to the plant dehydrin family.

LEA protein are late embryogenesis abundant in higher plant seed embryos. There are two subsets of LEA proteins (5a, and 5b), the first ones are expressed when the cotyledon weight reach 80 mg and the second set are expressed above 100 mg. The function of those proteins is not known. This chain is Late embryogenesis abundant protein D-11, found in Gossypium hirsutum (Upland cotton).